We begin with the raw amino-acid sequence, 204 residues long: Small ribosomal subunit protein uS4 (204 aa).

The region spanning 93-156 is the S4 RNA-binding domain; the sequence is SRLSSVLYHS…AKIPVIVEAV (64 aa).

Belongs to the universal ribosomal protein uS4 family. Part of the 30S ribosomal subunit. Contacts protein S5. The interaction surface between S4 and S5 is involved in control of translational fidelity.

Its function is as follows. One of the primary rRNA binding proteins, it binds directly to 16S rRNA where it nucleates assembly of the body of the 30S subunit. With S5 and S12 plays an important role in translational accuracy. The polypeptide is Small ribosomal subunit protein uS4 (Wolbachia sp. subsp. Brugia malayi (strain TRS)).